A 307-amino-acid polypeptide reads, in one-letter code: UPF0276 protein HI_1600 (307 aa).

It belongs to the UPF0276 family.

The sequence is that of UPF0276 protein HI_1600 from Haemophilus influenzae (strain ATCC 51907 / DSM 11121 / KW20 / Rd).